The chain runs to 937 residues: MATPSMMPQWAYMHIAGQDASEYLSPGLVQLARATDTYFSMGNKFRNPTVAPTHDVTTDRRQRLMLRFVPVDREDHTYSYKVRYTLAVGDNRVLDMASTFFDIRGVLDRGPSFKPYSGTAYNSLAPKGAPNTSQWIVTAGEERAVTTTTNTFGIASMKGDNITKEGLEIGKDITADNKPIYADKTYQPEPQVGEESWTDTDGTNEKFGGRALKPATKMKPCYGSFARPTNIKGGQAKNRKVKPTEGDVETEEPDIDMEFFDGREARDAFSPEIVLYTENVNLETPDSHVVYKPGTSDDNSHANLGQQAMPNRPNYIGFRDNFVGLMYYNSTGNMGVLAGQASQLNAVVDLQDRNTELSYQLLLDSLGDRTRYFSMWNQAVDSYDPDVRIIENHGIEDELPNYCFPLDGIGPAKTYQGIKSKDNGWEKDDNVSKSNEIAIGNNQAMEINIQANLWRSFLYSNVALYLPDVYKYTPTNITLPANTNTYEYMNGRVVSPSLVDSYINIGARWSLDPMDNVNPFNHHRNAGLRYRSMLLGNGRYVPFHIQVPQKFFAVKNLLLLPGSYTYEWNFRKDVNMVLQSSLGNDLRTDGASISFTSINLYATFFPMAHNTASTLEAMLRNDTNDQSFNDYLSAANMLYPIPANATNIPISIPSRNWAAFRGWSFTRLKTKETPSLGSGFDPYFVYSGSIPYLDGTFYLNHTFKKVSIMFDSSVSWPGNDRLLSPNEFEIKRTVDGEGYNVAQCNMTKDWFLVQMLANYNIGYQGFYIPEGYKDRMYSFFRNFQPMSRQVVDEVNYTDYKAVTLPYQHNNSGFVGYLAPTMRQGEPYPANYPYPLIGTTAVKSVTQKKFLCDRTMWRIPFSSNFMSMGALTDLGQNMLYANSAHALDMTFEVDPMDEPTLLYLLFEVFDVVRVHQPHRGVIEAVYLRTPFSAGNATT.

Alanine 2 is modified (N-acetylalanine; by host). Disordered regions lie at residues 190 to 210 (PQVG…FGGR) and 224 to 251 (SFAR…VETE). At tyrosine 925 the chain carries Phosphotyrosine; by host.

This sequence belongs to the adenoviridae hexon protein family. In terms of assembly, homotrimer. Interacts with the capsid vertex protein; this interaction binds the peripentonal hexons to the neighboring penton base. Interacts with the hexon-linking protein; this interaction tethers the hexons surrounding the penton to those situated in the central plate of the facet. Interacts with the hexon-interlacing protein; this interaction lashes the hexons together. Interacts with host dyneins DYNC1LI1 and DYNC1I2; this interaction might be involved in intracellular microtubule-dependent transport of incoming viral capsid. Interacts with the shutoff protein; this interaction allows folding and formation of hexons trimers. Interacts with pre-protein VI; this interaction probably allows nuclear import of hexon trimers and possibly pre-capsid assembly.

It localises to the virion. The protein localises to the host nucleus. Functionally, major capsid protein that self-associates to form 240 hexon trimers, each in the shape of a hexagon, building most of the pseudo T=25 capsid. Assembled into trimeric units with the help of the chaperone shutoff protein. Transported by pre-protein VI to the nucleus where it associates with other structural proteins to form an empty capsid. Might be involved, through its interaction with host dyneins, in the intracellular microtubule-dependent transport of incoming viral capsid to the nucleus. In Homo sapiens (Human), this protein is Hexon protein.